The primary structure comprises 104 residues: Large ribosomal subunit protein uL24 (104 aa).

It belongs to the universal ribosomal protein uL24 family. Part of the 50S ribosomal subunit.

Its function is as follows. One of two assembly initiator proteins, it binds directly to the 5'-end of the 23S rRNA, where it nucleates assembly of the 50S subunit. Functionally, one of the proteins that surrounds the polypeptide exit tunnel on the outside of the subunit. The chain is Large ribosomal subunit protein uL24 from Methylorubrum populi (strain ATCC BAA-705 / NCIMB 13946 / BJ001) (Methylobacterium populi).